Consider the following 314-residue polypeptide: Serine hydrolase-like protein 2 (314 aa).

One can recognise an AB hydrolase-1 domain in the interval 33 to 293; sequence PPVLCLHGWL…GNHCVHMSEP (261 aa). Ser-108 is an active-site residue.

Belongs to the AB hydrolase superfamily.

It is found in the cytoplasm. The protein localises to the perinuclear region. It localises to the peroxisome. Functionally, probable serine hydrolase. May be related to cell muscle hypertrophy. This Homo sapiens (Human) protein is Serine hydrolase-like protein 2 (SERHL2).